The sequence spans 200 residues: SKP1-like protein 19 (200 aa).

A compositionally biased stretch (basic and acidic residues) spans 67-92 (DDVVETHESSTKGDKTVEEAKKKPDD). The interval 67–109 (DDVVETHESSTKGDKTVEEAKKKPDDVAVPESTEGDDEAEDKK) is disordered. Residues 132 to 190 (ILAANYLNVQGLFDLCSKTIADYIKDMTPEEVRELFNIENDFTPEEEEAIRNENAWTFE) form an interaction with the F-box domain of F-box proteins region.

The protein belongs to the SKP1 family. As to quaternary structure, part of a SCF (SKP1-cullin-F-box) protein ligase complex. Interacts with CPR1/CPR30. Expressed in leaves and flowers.

It localises to the nucleus. Its pathway is protein modification; protein ubiquitination. Its function is as follows. Involved in ubiquitination and subsequent proteasomal degradation of target proteins. Together with CUL1, RBX1 and a F-box protein, it forms a SCF E3 ubiquitin ligase complex. The functional specificity of this complex depends on the type of F-box protein. In the SCF complex, it serves as an adapter that links the F-box protein to CUL1. The chain is SKP1-like protein 19 (ASK19) from Arabidopsis thaliana (Mouse-ear cress).